A 224-amino-acid polypeptide reads, in one-letter code: UPF0758 protein Tbd_2588 (224 aa).

The MPN domain occupies 102–224 (ALSSPAAVRD…ALSFAEAGHL (123 aa)). The Zn(2+) site is built by His173, His175, and Asp186. The short motif at 173–186 (HNHPSGVNEPSQAD) is the JAMM motif element.

The protein belongs to the UPF0758 family.

In Thiobacillus denitrificans (strain ATCC 25259 / T1), this protein is UPF0758 protein Tbd_2588.